Consider the following 746-residue polypeptide: Exostosin-1 (746 aa).

At 1 to 7 (MQAKKRY) the chain is on the cytoplasmic side. A helical; Signal-anchor for type II membrane protein membrane pass occupies residues 8–28 (FILLSAGSCLALLFYFGGLQF). Over 29 to 746 (RASRSHSRRE…RKKYRDIERL (718 aa)) the chain is Lumenal. Residue Asn-89 is glycosylated (N-linked (GlcNAc...) asparagine). 2 cysteine pairs are disulfide-bonded: Cys-98/Cys-103 and Cys-109/Cys-152. The a protein site is built by Leu-166 and Tyr-203. Residues Lys-267, Lys-269, Tyr-271, and Arg-280 each coordinate UDP. Cys-298 and Cys-312 are disulfide-bonded. His-300 contributes to the a protein binding site. UDP-binding residues include Tyr-319 and Tyr-324. Residue Asn-330 is glycosylated (N-linked (GlcNAc...) asparagine). Intrachain disulfides connect Cys-334-Cys-355 and Cys-652-Cys-704. Residues Arg-346 and Glu-349 each contribute to the UDP site.

This sequence belongs to the glycosyltransferase 47 family. As to quaternary structure, part of the heparan sulfate polymerase, a dimeric complex composed of EXT1 and EXT2. Could also form homooligomeric complexes. Interacts with NDST1. Post-translationally, N-glycosylated.

Its subcellular location is the golgi apparatus membrane. It is found in the golgi apparatus. The protein localises to the cis-Golgi network membrane. It localises to the endoplasmic reticulum membrane. It catalyses the reaction 3-O-{alpha-D-GlcNAc-[(1-&gt;4)-beta-D-GlcA-(1-&gt;4)-alpha-D-GlcNAc](n)-(1-&gt;4)-beta-D-GlcA-(1-&gt;3)-beta-D-Gal-(1-&gt;3)-beta-D-Gal-(1-&gt;4)-beta-D-Xyl}-L-seryl-[protein] + UDP-alpha-D-glucuronate = 3-O-{[(1-&gt;4)-beta-D-GlcA-(1-&gt;4)-alpha-D-GlcNAc](n+1)-(1-&gt;4)-beta-D-GlcA-(1-&gt;3)-beta-D-Gal-(1-&gt;3)-beta-D-Gal-(1-&gt;4)-beta-D-Xyl}-L-seryl-[protein] + UDP + H(+). It functions in the pathway protein modification; protein glycosylation. In terms of biological role, glycosyltransferase forming with EXT2 the heterodimeric heparan sulfate polymerase which catalyzes the elongation of the heparan sulfate glycan backbone. Glycan backbone extension consists in the alternating transfer of (1-&gt;4)-beta-D-GlcA and (1-&gt;4)-alpha-D-GlcNAc residues from their respective UDP-sugar donors. Both EXT1 and EXT2 are required for the full activity of the polymerase since EXT1 bears the N-acetylglucosaminyl-proteoglycan 4-beta-glucuronosyltransferase activity within the complex while EXT2 carries the glucuronosyl-N-acetylglucosaminyl-proteoglycan 4-alpha-N-acetylglucosaminyltransferase activity. Heparan sulfate proteoglycans are ubiquitous components of the extracellular matrix and play an important role in tissue homeostasis and signaling. In Pongo abelii (Sumatran orangutan), this protein is Exostosin-1 (EXT1).